An 85-amino-acid chain; its full sequence is Small ribosomal subunit protein uS17 (85 aa).

This sequence belongs to the universal ribosomal protein uS17 family. In terms of assembly, part of the 30S ribosomal subunit.

In terms of biological role, one of the primary rRNA binding proteins, it binds specifically to the 5'-end of 16S ribosomal RNA. This Agathobacter rectalis (strain ATCC 33656 / DSM 3377 / JCM 17463 / KCTC 5835 / VPI 0990) (Eubacterium rectale) protein is Small ribosomal subunit protein uS17.